A 195-amino-acid chain; its full sequence is dCTP deaminase (195 aa).

Residues 110-115, aspartate 128, 136-138, tyrosine 171, lysine 178, and glutamine 182 each bind dCTP; these read RSSLAR and VLE. Glutamate 138 serves as the catalytic Proton donor/acceptor.

The protein belongs to the dCTP deaminase family. Homotrimer.

The catalysed reaction is dCTP + H2O + H(+) = dUTP + NH4(+). It functions in the pathway pyrimidine metabolism; dUMP biosynthesis; dUMP from dCTP (dUTP route): step 1/2. Catalyzes the deamination of dCTP to dUTP. In Idiomarina loihiensis (strain ATCC BAA-735 / DSM 15497 / L2-TR), this protein is dCTP deaminase.